The following is a 138-amino-acid chain: Small ribosomal subunit protein bS18m (138 aa).

It belongs to the bacterial ribosomal protein bS18 family. As to quaternary structure, component of the mitochondrial small ribosomal subunit. Mature mitochondrial ribosomes consist of a small (37S) and a large (54S) subunit. The 37S subunit contains at least 33 different proteins and 1 molecule of RNA (15S). The 54S subunit contains at least 45 different proteins and 1 molecule of RNA (21S).

The protein resides in the mitochondrion. In Saccharomyces cerevisiae (strain RM11-1a) (Baker's yeast), this protein is Small ribosomal subunit protein bS18m (RSM18).